The sequence spans 90 residues: Probable Fe(2+)-trafficking protein (90 aa).

This sequence belongs to the Fe(2+)-trafficking protein family.

Could be a mediator in iron transactions between iron acquisition and iron-requiring processes, such as synthesis and/or repair of Fe-S clusters in biosynthetic enzymes. In Coxiella burnetii (strain CbuG_Q212) (Coxiella burnetii (strain Q212)), this protein is Probable Fe(2+)-trafficking protein.